Reading from the N-terminus, the 156-residue chain is Ribosomal RNA large subunit methyltransferase H (156 aa).

S-adenosyl-L-methionine is bound by residues Leu-73, Gly-104, and 123–128 (LSALTM).

The protein belongs to the RNA methyltransferase RlmH family. As to quaternary structure, homodimer.

The protein resides in the cytoplasm. The catalysed reaction is pseudouridine(1915) in 23S rRNA + S-adenosyl-L-methionine = N(3)-methylpseudouridine(1915) in 23S rRNA + S-adenosyl-L-homocysteine + H(+). Functionally, specifically methylates the pseudouridine at position 1915 (m3Psi1915) in 23S rRNA. The protein is Ribosomal RNA large subunit methyltransferase H of Tolumonas auensis (strain DSM 9187 / NBRC 110442 / TA 4).